Consider the following 539-residue polypeptide: Phosphoenolpyruvate carboxykinase (ATP) (539 aa).

Substrate-binding residues include arginine 64, tyrosine 206, and lysine 212. ATP-binding positions include lysine 212, histidine 231, and 247 to 255; that span reads GLSGTGKTT. Residues lysine 212 and histidine 231 each contribute to the Mn(2+) site. Mn(2+) is bound at residue aspartate 268. ATP-binding positions include glutamate 296, arginine 332, 448–449, and threonine 454; that span reads RI. Arginine 332 is a binding site for substrate.

Belongs to the phosphoenolpyruvate carboxykinase (ATP) family. As to quaternary structure, monomer. Mn(2+) is required as a cofactor.

The protein resides in the cytoplasm. The enzyme catalyses oxaloacetate + ATP = phosphoenolpyruvate + ADP + CO2. It participates in carbohydrate biosynthesis; gluconeogenesis. Its function is as follows. Involved in the gluconeogenesis. Catalyzes the conversion of oxaloacetate (OAA) to phosphoenolpyruvate (PEP) through direct phosphoryl transfer between the nucleoside triphosphate and OAA. The chain is Phosphoenolpyruvate carboxykinase (ATP) from Yersinia pestis bv. Antiqua (strain Antiqua).